A 326-amino-acid polypeptide reads, in one-letter code: Beta-ketoacyl-[acyl-carrier-protein] synthase III (326 aa).

Residues C112 and H251 contribute to the active site. Residues 252–256 (QANSR) form an ACP-binding region. N281 is a catalytic residue.

Belongs to the thiolase-like superfamily. FabH family. Homodimer.

The protein localises to the cytoplasm. It catalyses the reaction malonyl-[ACP] + acetyl-CoA + H(+) = 3-oxobutanoyl-[ACP] + CO2 + CoA. The protein operates within lipid metabolism; fatty acid biosynthesis. Functionally, catalyzes the condensation reaction of fatty acid synthesis by the addition to an acyl acceptor of two carbons from malonyl-ACP. Catalyzes the first condensation reaction which initiates fatty acid synthesis and may therefore play a role in governing the total rate of fatty acid production. Possesses both acetoacetyl-ACP synthase and acetyl transacylase activities. Its substrate specificity determines the biosynthesis of branched-chain and/or straight-chain of fatty acids. This chain is Beta-ketoacyl-[acyl-carrier-protein] synthase III, found in Clostridium botulinum (strain Kyoto / Type A2).